The sequence spans 750 residues: Tyrosine-protein phosphatase 2 (750 aa).

The tract at residues 1 to 20 (MDRIAQQYRNGKRDNNGNRM) is disordered. A Phosphoserine modification is found at Ser258. Disordered stretches follow at residues 327–348 (LHQKQLSQKQRGPQSTDDSKLY) and 425–450 (VKLPHSPKPPAVSEASTTETKTDKSY). Positions 330–348 (KQLSQKQRGPQSTDDSKLY) are enriched in polar residues. In terms of domain architecture, Tyrosine-protein phosphatase spans 383-737 (SPSPLSSDDT…IACYEALLNY (355 aa)). At Ser430 the chain carries Phosphoserine. Residue Cys666 is the Phosphocysteine intermediate of the active site.

It belongs to the protein-tyrosine phosphatase family. Non-receptor class subfamily. In terms of assembly, interacts with HOG1.

It is found in the cytoplasm. The protein resides in the nucleus. It carries out the reaction O-phospho-L-tyrosyl-[protein] + H2O = L-tyrosyl-[protein] + phosphate. Major phosphatase responsible with PTP3 for tyrosine dephosphorylation of MAP kinase HOG1 to inactivate its activity. May also be involved in the regulation of MAP kinase FUS3. May be implicated in the ubiquitin-mediated protein degradation. This Saccharomyces cerevisiae (strain ATCC 204508 / S288c) (Baker's yeast) protein is Tyrosine-protein phosphatase 2 (PTP2).